A 498-amino-acid chain; its full sequence is ATP synthase subunit beta, chloroplastic (498 aa).

An ATP-binding site is contributed by 172-179; it reads GGAGVGKT.

This sequence belongs to the ATPase alpha/beta chains family. F-type ATPases have 2 components, CF(1) - the catalytic core - and CF(0) - the membrane proton channel. CF(1) has five subunits: alpha(3), beta(3), gamma(1), delta(1), epsilon(1). CF(0) has four main subunits: a(1), b(1), b'(1) and c(9-12).

Its subcellular location is the plastid. It localises to the chloroplast thylakoid membrane. The enzyme catalyses ATP + H2O + 4 H(+)(in) = ADP + phosphate + 5 H(+)(out). In terms of biological role, produces ATP from ADP in the presence of a proton gradient across the membrane. The catalytic sites are hosted primarily by the beta subunits. This Calycanthus floridus var. glaucus (Eastern sweetshrub) protein is ATP synthase subunit beta, chloroplastic.